The sequence spans 95 residues: Protein Vpr (95 aa).

The homooligomerization stretch occupies residues 1–42 (MERAPEDAGPQREPYNEWALELLEELKNEAVRHFPRIWLHGL). 3 positions are modified to phosphoserine; by host: serine 79, serine 93, and serine 95.

The protein belongs to the HIV-1 VPR protein family. In terms of assembly, homooligomer, may form homodimer. Interacts with p6-gag region of the Pr55 Gag precursor protein through a (Leu-X-X)4 motif near the C-terminus of the P6gag protein. Interacts with host UNG. May interact with host RAD23A/HHR23A. Interacts with host VPRBP/DCAF1, leading to hijack the CUL4A-RBX1-DDB1-DCAF1/VPRBP complex, mediating ubiquitination of host proteins such as TERT and ZGPAT and arrest of the cell cycle in G2 phase. In terms of processing, phosphorylated on several residues by host. These phosphorylations regulate VPR activity for the nuclear import of the HIV-1 pre-integration complex.

It localises to the virion. The protein localises to the host nucleus. Its subcellular location is the host extracellular space. Functionally, during virus replication, may deplete host UNG protein, and incude G2-M cell cycle arrest. Acts by targeting specific host proteins for degradation by the 26S proteasome, through association with the cellular CUL4A-DDB1 E3 ligase complex by direct interaction with host VPRPB/DCAF-1. Cell cycle arrest reportedly occurs within hours of infection and is not blocked by antiviral agents, suggesting that it is initiated by the VPR carried into the virion. Additionally, VPR induces apoptosis in a cell cycle dependent manner suggesting that these two effects are mechanistically linked. Detected in the serum and cerebrospinal fluid of AIDS patient, VPR may also induce cell death to bystander cells. During virus entry, plays a role in the transport of the viral pre-integration (PIC) complex to the host nucleus. This function is crucial for viral infection of non-dividing macrophages. May act directly at the nuclear pore complex, by binding nucleoporins phenylalanine-glycine (FG)-repeat regions. This Human immunodeficiency virus type 1 group N (isolate YBF30) (HIV-1) protein is Protein Vpr.